Consider the following 380-residue polypeptide: Cytochrome b (380 aa).

4 helical membrane passes run 34–54 (FGSLLTICLLTQILTGLLLAM), 78–99 (WLIRNLHANGASFFFICIYLHI), 114–134 (WNTGVILLLTLMATAFVGYVL), and 179–199 (FFALHFLLPFMIVGLSMIHLT). Positions 84 and 98 each coordinate heme b. Residues His-183 and His-197 each contribute to the heme b site. His-202 is an a ubiquinone binding site. Transmembrane regions (helical) follow at residues 227 to 247 (LKDILGFILMLLPLTTLALFS), 289 to 309 (LGGVLALAASVLILFLAPFLH), 321 to 341 (ISQLLFWILVANLLILTWVGS), and 348 to 368 (FIIIGQLASITYFTILLILFP).

The protein belongs to the cytochrome b family. In terms of assembly, the cytochrome bc1 complex contains 11 subunits: 3 respiratory subunits (MT-CYB, CYC1 and UQCRFS1), 2 core proteins (UQCRC1 and UQCRC2) and 6 low-molecular weight proteins (UQCRH/QCR6, UQCRB/QCR7, UQCRQ/QCR8, UQCR10/QCR9, UQCR11/QCR10 and a cleavage product of UQCRFS1). This cytochrome bc1 complex then forms a dimer. The cofactor is heme b.

The protein resides in the mitochondrion inner membrane. Component of the ubiquinol-cytochrome c reductase complex (complex III or cytochrome b-c1 complex) that is part of the mitochondrial respiratory chain. The b-c1 complex mediates electron transfer from ubiquinol to cytochrome c. Contributes to the generation of a proton gradient across the mitochondrial membrane that is then used for ATP synthesis. This Pelecanoides garnotii (Peruvian diving petrel) protein is Cytochrome b (MT-CYB).